Reading from the N-terminus, the 168-residue chain is Cyanate hydratase (168 aa).

Residues Arg-91, Glu-94, and Ser-117 contribute to the active site.

It belongs to the cyanase family.

It catalyses the reaction cyanate + hydrogencarbonate + 3 H(+) = NH4(+) + 2 CO2. In terms of biological role, catalyzes the reaction of cyanate with bicarbonate to produce ammonia and carbon dioxide. This is Cyanate hydratase from Arabidopsis thaliana (Mouse-ear cress).